The following is a 392-amino-acid chain: Methylthioribose-1-phosphate isomerase (392 aa).

The active-site Proton donor is aspartate 268.

This sequence belongs to the eIF-2B alpha/beta/delta subunits family. MtnA subfamily.

The protein resides in the cytoplasm. It is found in the nucleus. It carries out the reaction 5-(methylsulfanyl)-alpha-D-ribose 1-phosphate = 5-(methylsulfanyl)-D-ribulose 1-phosphate. Its pathway is amino-acid biosynthesis; L-methionine biosynthesis via salvage pathway; L-methionine from S-methyl-5-thio-alpha-D-ribose 1-phosphate: step 1/6. In terms of biological role, catalyzes the interconversion of methylthioribose-1-phosphate (MTR-1-P) into methylthioribulose-1-phosphate (MTRu-1-P). The polypeptide is Methylthioribose-1-phosphate isomerase (Ajellomyces capsulatus (strain G186AR / H82 / ATCC MYA-2454 / RMSCC 2432) (Darling's disease fungus)).